The following is a 316-amino-acid chain: Bifunctional protein FolD (316 aa).

Residues 165-167 (GKS) and Ile231 contribute to the NADP(+) site.

This sequence belongs to the tetrahydrofolate dehydrogenase/cyclohydrolase family. As to quaternary structure, homodimer.

It carries out the reaction (6R)-5,10-methylene-5,6,7,8-tetrahydrofolate + NADP(+) = (6R)-5,10-methenyltetrahydrofolate + NADPH. The enzyme catalyses (6R)-5,10-methenyltetrahydrofolate + H2O = (6R)-10-formyltetrahydrofolate + H(+). Its pathway is one-carbon metabolism; tetrahydrofolate interconversion. Functionally, catalyzes the oxidation of 5,10-methylenetetrahydrofolate to 5,10-methenyltetrahydrofolate and then the hydrolysis of 5,10-methenyltetrahydrofolate to 10-formyltetrahydrofolate. The sequence is that of Bifunctional protein FolD from Sphingobium chlorophenolicum.